The following is a 311-amino-acid chain: Exosome complex component Rrp4 (311 aa).

The region spanning 63–131 (GDVVIGEITD…EVKKVKLGLK (69 aa)) is the S1 motif domain. Residues 139 to 197 (RDGILVYITPTKVPRLIGKRGSMINMVKEKTHCDIVVGQNGVVWIKGEPDMERIAEKVV) enclose the KH domain. Residues 222–311 (GVEPEIQVEE…EVKDENNSER (90 aa)) are disordered. Acidic residues predominate over residues 241–300 (PESEDFEEASDYSEDVEVSPESEDIEEVSDESEDLEVESEDVEEGTDTPAAEEDDGEAGD). Residues 301-311 (AEVKDENNSER) show a composition bias toward basic and acidic residues.

It belongs to the RRP4 family. As to quaternary structure, component of the archaeal exosome complex. Forms a trimer of Rrp4 and/or Csl4 subunits. The trimer associates with a hexameric ring-like arrangement composed of 3 Rrp41-Rrp42 heterodimers.

The protein resides in the cytoplasm. Non-catalytic component of the exosome, which is a complex involved in RNA degradation. Increases the RNA binding and the efficiency of RNA degradation. Confers strong poly(A) specificity to the exosome. This Methanothermobacter thermautotrophicus (strain ATCC 29096 / DSM 1053 / JCM 10044 / NBRC 100330 / Delta H) (Methanobacterium thermoautotrophicum) protein is Exosome complex component Rrp4.